Here is a 533-residue protein sequence, read N- to C-terminus: Dipeptidase (533 aa).

C3 is an active-site residue.

It belongs to the peptidase C69 family.

It carries out the reaction an L-aminoacyl-L-amino acid + H2O = 2 an L-alpha-amino acid. Functionally, hydrolyzes a wide range of dipeptides. Highest activity against Ala-Gln. The polypeptide is Dipeptidase (Bifidobacterium longum (strain NCC 2705)).